We begin with the raw amino-acid sequence, 241 residues long: 2-C-methyl-D-erythritol 4-phosphate cytidylyltransferase (241 aa).

This sequence belongs to the IspD/TarI cytidylyltransferase family. IspD subfamily.

It carries out the reaction 2-C-methyl-D-erythritol 4-phosphate + CTP + H(+) = 4-CDP-2-C-methyl-D-erythritol + diphosphate. It functions in the pathway isoprenoid biosynthesis; isopentenyl diphosphate biosynthesis via DXP pathway; isopentenyl diphosphate from 1-deoxy-D-xylulose 5-phosphate: step 2/6. In terms of biological role, catalyzes the formation of 4-diphosphocytidyl-2-C-methyl-D-erythritol from CTP and 2-C-methyl-D-erythritol 4-phosphate (MEP). This chain is 2-C-methyl-D-erythritol 4-phosphate cytidylyltransferase, found in Mycobacterium leprae (strain Br4923).